We begin with the raw amino-acid sequence, 172 residues long: Trypsin inhibitor 1A (172 aa).

Intrachain disulfides connect C40–C84 and C133–C139.

The protein belongs to the protease inhibitor I3 (leguminous Kunitz-type inhibitor) family.

Functionally, WTI-1B inhibits trypsin stoichiometrically. This chain is Trypsin inhibitor 1A, found in Psophocarpus tetragonolobus (Winged bean).